We begin with the raw amino-acid sequence, 447 residues long: UDP-glycosyltransferase 76B1 (447 aa).

Residues S269, 327-328, 345-353, and 367-370 each bind UDP-alpha-D-glucose; these read WA, HCGWNSTLE, and FGDQ.

This sequence belongs to the UDP-glycosyltransferase family. As to expression, expressed in roots, leaves, hydathodes, sepals and style.

Its function is as follows. Glycosylates the amino acid-related molecules isoleucic acid (2-hydroxy-3-methylpentanoic acid) and valic acid (2-hydroxy-3-methylbutyric acid). Acts as a negative regulator of salicylic acid (SA)-dependent plant defense in the absence of pathogens and promotes the jasmonate (JA) response. Negatively influences the onset of senescence. In Arabidopsis thaliana (Mouse-ear cress), this protein is UDP-glycosyltransferase 76B1.